The sequence spans 247 residues: Probable transcriptional regulatory protein Swit_2142 (247 aa).

Residues methionine 1–lysine 14 show a composition bias toward basic residues. The tract at residues methionine 1–arginine 21 is disordered.

Belongs to the TACO1 family.

It is found in the cytoplasm. This Rhizorhabdus wittichii (strain DSM 6014 / CCUG 31198 / JCM 15750 / NBRC 105917 / EY 4224 / RW1) (Sphingomonas wittichii) protein is Probable transcriptional regulatory protein Swit_2142.